The sequence spans 230 residues: 2,3-bisphosphoglycerate-dependent phosphoglycerate mutase (230 aa).

Residues 8 to 15 (RHGESEWN), 21 to 22 (TG), Arg60, 87 to 90 (ERHY), Lys98, 114 to 115 (RR), and 183 to 184 (GN) contribute to the substrate site. The active-site Tele-phosphohistidine intermediate is His9. The active-site Proton donor/acceptor is Glu87.

The protein belongs to the phosphoglycerate mutase family. BPG-dependent PGAM subfamily.

It catalyses the reaction (2R)-2-phosphoglycerate = (2R)-3-phosphoglycerate. Its pathway is carbohydrate degradation; glycolysis; pyruvate from D-glyceraldehyde 3-phosphate: step 3/5. Its function is as follows. Catalyzes the interconversion of 2-phosphoglycerate and 3-phosphoglycerate. This is 2,3-bisphosphoglycerate-dependent phosphoglycerate mutase from Streptococcus uberis (strain ATCC BAA-854 / 0140J).